Consider the following 145-residue polypeptide: Small ribosomal subunit protein uS9 (145 aa).

Belongs to the universal ribosomal protein uS9 family.

It localises to the cytoplasm. The protein is Small ribosomal subunit protein uS9 (RPS16) of Gossypium hirsutum (Upland cotton).